The chain runs to 181 residues: MLRGAVARRYAQALYEIAQEKNALEAMEQELKGVAEAIEGTRELQKVLYHPQVLPGEKKNLLKALFTDKVSDETLNFLGLVVDKRRENYIAGIAAEFSVLANEARGKVAAEVTTAIEIDEKQKQELVKVASRMAGKEVEPTFGVDPSLIGGVVVRIGSKVIDGSIKTRLATIKSRLMSKTS.

The protein belongs to the ATPase delta chain family. In terms of assembly, F-type ATPases have 2 components, F(1) - the catalytic core - and F(0) - the membrane proton channel. F(1) has five subunits: alpha(3), beta(3), gamma(1), delta(1), epsilon(1). F(0) has three main subunits: a(1), b(2) and c(10-14). The alpha and beta chains form an alternating ring which encloses part of the gamma chain. F(1) is attached to F(0) by a central stalk formed by the gamma and epsilon chains, while a peripheral stalk is formed by the delta and b chains.

It is found in the cell membrane. Functionally, f(1)F(0) ATP synthase produces ATP from ADP in the presence of a proton or sodium gradient. F-type ATPases consist of two structural domains, F(1) containing the extramembraneous catalytic core and F(0) containing the membrane proton channel, linked together by a central stalk and a peripheral stalk. During catalysis, ATP synthesis in the catalytic domain of F(1) is coupled via a rotary mechanism of the central stalk subunits to proton translocation. This protein is part of the stalk that links CF(0) to CF(1). It either transmits conformational changes from CF(0) to CF(1) or is implicated in proton conduction. This chain is ATP synthase subunit delta, found in Desulforamulus reducens (strain ATCC BAA-1160 / DSM 100696 / MI-1) (Desulfotomaculum reducens).